The chain runs to 574 residues: MRASQYLIATQKETPADAEVISHKLMLRAGLIRKMASGLYNWLPLGLRVLRKVENIVRQEMDKSGAQEVLMPVVQPAEIWQESGRWQQYGPELLRINDRHDRAFCLGPTHEEVITDLIRNEVKSYKQLPLNFYQIQTKFRDEVRPRFGVMRAREFLMKDAYSFHISQESLQETYDVMHRTYCNIFDRIGLQYRPVLADTGSIGGSASHEFHVLADSGEDDIAFSSDSDFAANVELAEALAPAKQTPGSSGAEEKHTPSQKSIEEVAAFLSVTPAQTLKTLIVLGETEDEGPAPLVALVLRGDHSLNDIKVSKLEGVADPLTFAPEERIKNELGAEVGSLGPIGLKITVIADRAAAACADFVCGANKTDYHLINANWDKEASYSRVEDLRNVVVGDPSPCGKGTIEIKRGIEVGHIFQLGTKYSAAMKATVLDENGKDVTMTMGCYGIGVSRIVASAIEQNHDDNGIIWPDAIAPFQLAIVPINMHKSDAVKEACETLYDQCQTAGIDVLLMDEPKARLGAMLADVELVGIPHRVVIGDRGLEQGNIEYKGRRDAESQEVAAASLFEFLREKIAP.

It belongs to the class-II aminoacyl-tRNA synthetase family. ProS type 1 subfamily. Homodimer.

It is found in the cytoplasm. It catalyses the reaction tRNA(Pro) + L-proline + ATP = L-prolyl-tRNA(Pro) + AMP + diphosphate. Functionally, catalyzes the attachment of proline to tRNA(Pro) in a two-step reaction: proline is first activated by ATP to form Pro-AMP and then transferred to the acceptor end of tRNA(Pro). As ProRS can inadvertently accommodate and process non-cognate amino acids such as alanine and cysteine, to avoid such errors it has two additional distinct editing activities against alanine. One activity is designated as 'pretransfer' editing and involves the tRNA(Pro)-independent hydrolysis of activated Ala-AMP. The other activity is designated 'posttransfer' editing and involves deacylation of mischarged Ala-tRNA(Pro). The misacylated Cys-tRNA(Pro) is not edited by ProRS. The chain is Proline--tRNA ligase from Teredinibacter turnerae (strain ATCC 39867 / T7901).